The following is a 1009-amino-acid chain: Dihydropyrimidine dehydrogenase [NADP(+)] (1009 aa).

The 4Fe-4S ferredoxin-type 1 domain occupies 69–99; that stretch reads RGALFESARCLKCADAPCQKGCPTQLDIKSF. [4Fe-4S] cluster-binding residues include C78, C81, C86, and C90. An FAD-binding site is contributed by V128. Positions 129, 135, 139, and 155 each coordinate [4Fe-4S] cluster. Residues 193 to 197, 217 to 225, R234, and L260 contribute to the FAD site; these read GCGPT and EKEQYLGGL. NADP(+) contacts are provided by residues 339–342, 363–364, R370, 436–438, and 479–484; these read AGDT, RR, AFG, and DLVGNG. An FAD-binding site is contributed by 478 to 486; that stretch reads GDLVGNGTT. FMN-binding positions include S548 and 572–573; that span reads KT. Residues N607 and 666-668 each bind substrate; that span reads NLS. C669 serves as the catalytic Proton acceptor. K707 is a binding site for FMN. 734 to 735 provides a ligand contact to substrate; that stretch reads NT. Residues G765, 791-793, and 814-815 each bind FMN; these read TGG and CS. 4Fe-4S ferredoxin-type domains are found at residues 932–964 and 965–995; these read VVAL…FDGK and THIP…MVPR. [4Fe-4S] cluster-binding residues include C941, C944, C947, C951, C974, C977, C980, and C984.

The protein belongs to the dihydropyrimidine dehydrogenase family. In terms of assembly, homodimer. Requires [4Fe-4S] cluster as cofactor. It depends on FAD as a cofactor. FMN is required as a cofactor.

It is found in the cytoplasm. It carries out the reaction 5,6-dihydrouracil + NADP(+) = uracil + NADPH + H(+). It participates in amino-acid biosynthesis; beta-alanine biosynthesis. In terms of biological role, involved in pyrimidine base degradation. Catalyzes the reduction of uracil and thymine. The protein is Dihydropyrimidine dehydrogenase [NADP(+)] (pyd1) of Dictyostelium discoideum (Social amoeba).